Here is a 495-residue protein sequence, read N- to C-terminus: Glycerol kinase (495 aa).

T11 contacts ADP. Residues T11, T12, and S13 each coordinate ATP. T11 serves as a coordination point for sn-glycerol 3-phosphate. Residue R15 participates in ADP binding. R81, E82, Y133, and D242 together coordinate sn-glycerol 3-phosphate. Glycerol contacts are provided by R81, E82, Y133, D242, and Q243. ADP is bound by residues T264 and G307. Residues T264, G307, Q311, and G408 each contribute to the ATP site. Positions 408 and 412 each coordinate ADP.

Belongs to the FGGY kinase family.

It catalyses the reaction glycerol + ATP = sn-glycerol 3-phosphate + ADP + H(+). The protein operates within polyol metabolism; glycerol degradation via glycerol kinase pathway; sn-glycerol 3-phosphate from glycerol: step 1/1. Inhibited by fructose 1,6-bisphosphate (FBP). Key enzyme in the regulation of glycerol uptake and metabolism. Catalyzes the phosphorylation of glycerol to yield sn-glycerol 3-phosphate. This chain is Glycerol kinase, found in Acinetobacter baylyi (strain ATCC 33305 / BD413 / ADP1).